The primary structure comprises 382 residues: Heme A synthase (382 aa).

Helical transmembrane passes span 25–45 (GAVR…VAVG), 112–132 (LLGR…WARG), 141–161 (GLLG…IMVA), 176–196 (LALH…LAAG), 211–231 (VVAC…GLVA), 270–290 (LALV…VAIA), 303–323 (AAAG…GLGI), and 327–347 (LLHV…AVLI). Histidine 277 contributes to the heme binding site. Residue histidine 338 coordinates heme.

The protein belongs to the COX15/CtaA family. Type 2 subfamily. In terms of assembly, interacts with CtaB. Requires heme b as cofactor.

Its subcellular location is the cell membrane. It carries out the reaction Fe(II)-heme o + 2 A + H2O = Fe(II)-heme a + 2 AH2. It functions in the pathway porphyrin-containing compound metabolism; heme A biosynthesis; heme A from heme O: step 1/1. Catalyzes the conversion of heme O to heme A by two successive hydroxylations of the methyl group at C8. The first hydroxylation forms heme I, the second hydroxylation results in an unstable dihydroxymethyl group, which spontaneously dehydrates, resulting in the formyl group of heme A. This chain is Heme A synthase, found in Methylorubrum extorquens (strain CM4 / NCIMB 13688) (Methylobacterium extorquens).